Consider the following 906-residue polypeptide: Inactive angiotensin-converting enzyme-related protein (906 aa).

The first 19 residues, 1-19 (MKFHILLLLLVGACLPVFT), serve as a signal peptide directing secretion. A disordered region spans residues 28-95 (LLPADEAPKD…SPTPEPEPAI (68 aa)). The span at 67–83 (PEPKPEPEPEPEPKPEP) shows a compositional bias: basic and acidic residues. N-linked (GlcNAc...) asparagine glycosylation occurs at Asn159. The Peptidase M2 domain maps to 175–765 (IKDEEKLRSW…EIDQVVVGWD (591 aa)). Cysteines 289 and 297 form a disulfide. N-linked (GlcNAc...) asparagine glycosylation is present at Asn653. Positions 862-882 (VTTPEPSAEPEPTAKTTTKMP) are disordered. The span at 863-882 (TTPEPSAEPEPTAKTTTKMP) shows a compositional bias: low complexity.

Belongs to the peptidase M2 family. As to expression, expressed in the hypodermis, in the vulva during organogenesis, and in the ray papillae of the male tail.

Its function is as follows. Inactive as a metallopeptidase, due to a lack of active site residues. Required for larval molting, male tail development, and formation of adult alae. Acts in the heterochronic pathway and plays a role in the developmental timing of postembryonic hypodermal seam cell division and adult alae production. Acts synergistically with apl-1 in let-7 regulated postembryonic cell division events. Might act downstream of the heterochronic protein lin-41. Negative regulator of lifespan, heat and oxidative stress response and age-related degenerative changes like reduced pharyngeal pumping and decreased body movements. Lifespan restriction is dependent on the forkhead-type transcription factor daf-16. This is Inactive angiotensin-converting enzyme-related protein from Caenorhabditis elegans.